Reading from the N-terminus, the 318-residue chain is Probable RNA methyltransferase At5g51130 (318 aa).

2 disordered regions span residues 1 to 61 (MGRD…NQEV) and 146 to 184 (NSTKPSEKKSSSEGADGVHGSKEPSVSLSNGEAKADSAE). The segment covering 16–34 (RSNENEKSVEKVVANEEKV) has biased composition (basic and acidic residues). Low complexity predominate over residues 37 to 52 (QQKQKQQQGQQGNCNQ). The Bin3-type SAM domain maps to 82–318 (DPRLKVLKKE…FDRQILAFQK (237 aa)).

This sequence belongs to the methyltransferase superfamily.

Its function is as follows. Probable RNA methyltransferase. This is Probable RNA methyltransferase At5g51130 from Arabidopsis thaliana (Mouse-ear cress).